The chain runs to 511 residues: Glucans biosynthesis protein G (511 aa).

Positions 1-22 are cleaved as a signal peptide; the sequence is MMKMRWLSAAVMLTLYTSSSWA.

The protein belongs to the OpgD/OpgG family.

The protein localises to the periplasm. It functions in the pathway glycan metabolism; osmoregulated periplasmic glucan (OPG) biosynthesis. Its function is as follows. Involved in the biosynthesis of osmoregulated periplasmic glucans (OPGs). The sequence is that of Glucans biosynthesis protein G from Shigella dysenteriae serotype 1 (strain Sd197).